Here is a 116-residue protein sequence, read N- to C-terminus: CDKN2AIP N-terminal-like protein (116 aa).

At Met-1 the chain carries N-acetylmethionine. The XRN2-binding (XTBD) domain maps to 24-116 (AEQFRSYSES…RSELMKKHQS (93 aa)).

Belongs to the CARF family. Interacts with XRN2; the interaction is direct.

The sequence is that of CDKN2AIP N-terminal-like protein (CDKN2AIPNL) from Bos taurus (Bovine).